The following is a 392-amino-acid chain: Histidinol-phosphate aminotransferase 2 (392 aa).

The residue at position 228 (lysine 228) is an N6-(pyridoxal phosphate)lysine.

It belongs to the class-II pyridoxal-phosphate-dependent aminotransferase family. Histidinol-phosphate aminotransferase subfamily. As to quaternary structure, homodimer. Requires pyridoxal 5'-phosphate as cofactor.

It catalyses the reaction L-histidinol phosphate + 2-oxoglutarate = 3-(imidazol-4-yl)-2-oxopropyl phosphate + L-glutamate. Its pathway is amino-acid biosynthesis; L-histidine biosynthesis; L-histidine from 5-phospho-alpha-D-ribose 1-diphosphate: step 7/9. The protein is Histidinol-phosphate aminotransferase 2 of Nitrosospira multiformis (strain ATCC 25196 / NCIMB 11849 / C 71).